Reading from the N-terminus, the 405-residue chain is Glucan 1,3-beta-glucosidase A (405 aa).

Positions 1–14 are cleaved as a signal peptide; that stretch reads MLPLLLCIVPYCWS. The active-site Proton donor is E199. Disulfide bonds link C280-C405 and C306-C332. The active-site Nucleophile is E298.

This sequence belongs to the glycosyl hydrolase 5 (cellulase A) family. As to quaternary structure, monomer. Mn(2+) is required as a cofactor.

The protein localises to the secreted. The enzyme catalyses Successive hydrolysis of beta-D-glucose units from the non-reducing ends of (1-&gt;3)-beta-D-glucans, releasing alpha-glucose.. Functionally, beta-glucanases participate in the metabolism of beta-glucan, the main structural component of the cell wall. It could also function biosynthetically as a transglycosylase. This Aspergillus oryzae (strain ATCC 42149 / RIB 40) (Yellow koji mold) protein is Glucan 1,3-beta-glucosidase A (exgA).